The sequence spans 322 residues: tRNA dimethylallyltransferase (322 aa).

19-26 (GPTASGKT) is an ATP binding site. Substrate is bound at residue 21-26 (TASGKT). 3 interaction with substrate tRNA regions span residues 44–47 (DSAL), 168–172 (QRIQR), and 255–260 (RCVGYR).

It belongs to the IPP transferase family. In terms of assembly, monomer. Requires Mg(2+) as cofactor.

It catalyses the reaction adenosine(37) in tRNA + dimethylallyl diphosphate = N(6)-dimethylallyladenosine(37) in tRNA + diphosphate. In terms of biological role, catalyzes the transfer of a dimethylallyl group onto the adenine at position 37 in tRNAs that read codons beginning with uridine, leading to the formation of N6-(dimethylallyl)adenosine (i(6)A). This Cupriavidus taiwanensis (strain DSM 17343 / BCRC 17206 / CCUG 44338 / CIP 107171 / LMG 19424 / R1) (Ralstonia taiwanensis (strain LMG 19424)) protein is tRNA dimethylallyltransferase.